We begin with the raw amino-acid sequence, 169 residues long: Ureidoglycolate lyase (169 aa).

It belongs to the ureidoglycolate lyase family. In terms of assembly, homodimer. Ni(2+) is required as a cofactor.

The catalysed reaction is (S)-ureidoglycolate = urea + glyoxylate. It participates in nitrogen metabolism; (S)-allantoin degradation. In terms of biological role, catalyzes the catabolism of the allantoin degradation intermediate (S)-ureidoglycolate, generating urea and glyoxylate. Involved in the utilization of allantoin as nitrogen source. The protein is Ureidoglycolate lyase of Brucella anthropi (strain ATCC 49188 / DSM 6882 / CCUG 24695 / JCM 21032 / LMG 3331 / NBRC 15819 / NCTC 12168 / Alc 37) (Ochrobactrum anthropi).